Consider the following 304-residue polypeptide: Ribonuclease Z (304 aa).

Residues histidine 63, histidine 65, aspartate 67, histidine 68, histidine 143, aspartate 213, and histidine 271 each contribute to the Zn(2+) site. Aspartate 67 functions as the Proton acceptor in the catalytic mechanism.

Belongs to the RNase Z family. As to quaternary structure, homodimer. Zn(2+) serves as cofactor.

It carries out the reaction Endonucleolytic cleavage of RNA, removing extra 3' nucleotides from tRNA precursor, generating 3' termini of tRNAs. A 3'-hydroxy group is left at the tRNA terminus and a 5'-phosphoryl group is left at the trailer molecule.. Its function is as follows. Zinc phosphodiesterase, which displays some tRNA 3'-processing endonuclease activity. Probably involved in tRNA maturation, by removing a 3'-trailer from precursor tRNA. The protein is Ribonuclease Z of Porphyromonas gingivalis (strain ATCC BAA-308 / W83).